The primary structure comprises 373 residues: Chaperone protein DnaJ (373 aa).

Residues 4–68 (NYYQILGVSK…QKRAAYDRLG (65 aa)) form the J domain. The CR-type zinc finger occupies 136–214 (GIEKNINFSS…CHGMGRYHKQ (79 aa)). Residues C149, C152, C166, C169, C188, C191, C202, and C205 each coordinate Zn(2+). CXXCXGXG motif repeat units follow at residues 149 to 156 (CNTCHGSG), 166 to 173 (CDACSGVG), 188 to 195 (CHKCQGNG), and 202 to 209 (CKKCHGMG).

The protein belongs to the DnaJ family. As to quaternary structure, homodimer. It depends on Zn(2+) as a cofactor.

It localises to the cytoplasm. Functionally, participates actively in the response to hyperosmotic and heat shock by preventing the aggregation of stress-denatured proteins and by disaggregating proteins, also in an autonomous, DnaK-independent fashion. Unfolded proteins bind initially to DnaJ; upon interaction with the DnaJ-bound protein, DnaK hydrolyzes its bound ATP, resulting in the formation of a stable complex. GrpE releases ADP from DnaK; ATP binding to DnaK triggers the release of the substrate protein, thus completing the reaction cycle. Several rounds of ATP-dependent interactions between DnaJ, DnaK and GrpE are required for fully efficient folding. Also involved, together with DnaK and GrpE, in the DNA replication of plasmids through activation of initiation proteins. This Rickettsia rickettsii (strain Sheila Smith) protein is Chaperone protein DnaJ.